Reading from the N-terminus, the 185-residue chain is ATP-dependent protease subunit HslV (185 aa).

The active site involves threonine 2. The Na(+) site is built by glycine 157, cysteine 160, and threonine 163.

Belongs to the peptidase T1B family. HslV subfamily. As to quaternary structure, a double ring-shaped homohexamer of HslV is capped on each side by a ring-shaped HslU homohexamer. The assembly of the HslU/HslV complex is dependent on binding of ATP.

It localises to the cytoplasm. The catalysed reaction is ATP-dependent cleavage of peptide bonds with broad specificity.. Allosterically activated by HslU binding. Its function is as follows. Protease subunit of a proteasome-like degradation complex believed to be a general protein degrading machinery. The protein is ATP-dependent protease subunit HslV of Idiomarina loihiensis (strain ATCC BAA-735 / DSM 15497 / L2-TR).